The following is a 120-amino-acid chain: Glycine cleavage system H protein (120 aa).

Residues Val-17 to Lys-99 enclose the Lipoyl-binding domain. Lys-58 is modified (N6-lipoyllysine).

The protein belongs to the GcvH family. As to quaternary structure, the glycine cleavage system is composed of four proteins: P, T, L and H. It depends on (R)-lipoate as a cofactor.

The glycine cleavage system catalyzes the degradation of glycine. The H protein shuttles the methylamine group of glycine from the P protein to the T protein. This Rhizobium etli (strain ATCC 51251 / DSM 11541 / JCM 21823 / NBRC 15573 / CFN 42) protein is Glycine cleavage system H protein.